A 123-amino-acid polypeptide reads, in one-letter code: MSKPMYVKFEVPEELAEKAYEALEIARDTGRIRKGTNETTKAVEREEAVLVLIAEDVDPEEVVAHLPELCDEKGIPYVYVPSKDELGAAAGIDVAAASACIIDPGDAKDLVDEIIEKVEELRE.

It belongs to the eukaryotic ribosomal protein eL8 family. Part of the 50S ribosomal subunit. Probably part of the RNase P complex.

The protein localises to the cytoplasm. In terms of biological role, multifunctional RNA-binding protein that recognizes the K-turn motif in ribosomal RNA, the RNA component of RNase P, box H/ACA, box C/D and box C'/D' sRNAs. This is Large ribosomal subunit protein eL8 from Methanopyrus kandleri (strain AV19 / DSM 6324 / JCM 9639 / NBRC 100938).